The chain runs to 537 residues: ATP synthase subunit alpha (537 aa).

Residue 171-178 (GDRQTGKT) coordinates ATP.

This sequence belongs to the ATPase alpha/beta chains family. F-type ATPases have 2 components, CF(1) - the catalytic core - and CF(0) - the membrane proton channel. CF(1) has five subunits: alpha(3), beta(3), gamma(1), delta(1), epsilon(1). CF(0) has four main subunits: a, b, b' and c.

Its subcellular location is the cell inner membrane. The enzyme catalyses ATP + H2O + 4 H(+)(in) = ADP + phosphate + 5 H(+)(out). Functionally, produces ATP from ADP in the presence of a proton gradient across the membrane. The alpha chain is a regulatory subunit. This is ATP synthase subunit alpha from Chloroherpeton thalassium (strain ATCC 35110 / GB-78).